A 496-amino-acid polypeptide reads, in one-letter code: MADESETAVKLPAPSLPLMMEGNGNGHEHCSDCENEEDISHNRGGLSPANDTGAKKKKKKQKKKKEKGNDMDSTQDQPVKMNSLPAERIQEIQKAIELFSVGQGPAKTMEEASKRSYQFWDTQPVPKLGEVVNTHGPVEPDKDNIRQEPYTLPQGFTWDALDLGDRGVLKELYTLLNENYVEDDDNMFRFDYSPEFLLWALRPPGWLPQWHCGVRVVSSRKLVGFISAIPANIHIYDTEKKMVEINFLCVHKKLRSKRVAPVLIREITRRVHLEGIFQAVYTAGVVLPKPVGTCRYWHRSLNPRKLIEVKFSHLSRNMTMQRTMKLYRLPETPKTAGLRPMEKKDIPVVHQLLSRYLKQFNLTPVMNQEEVEHWFYPQENIIDTFVVENANGEVTDFLSFYTLPSTIMNHPTHKSLKAAYSFYNVHTQTPLLDLMSDALVLAKMKGFDVFNALDLMENKTFLEKLKFGIGDGNLQYYLYNWKCPSMGAEKVGLVLQ.

The segment at 1–81 (MADESETAVK…DSTQDQPVKM (81 aa)) is disordered. Phosphoserine occurs at positions 31 and 47. Over residues 55 to 66 (KKKKKKQKKKKE) the composition is skewed to basic residues. S83 carries the phosphoserine modification. Tetradecanoyl-CoA is bound by residues Q118, F119, W120, F247, L248, C249, V250, S256, R258, V259, and A260.

This sequence belongs to the NMT family.

It is found in the cytoplasm. The protein resides in the cytosol. It localises to the membrane. It carries out the reaction N-terminal glycyl-[protein] + tetradecanoyl-CoA = N-tetradecanoylglycyl-[protein] + CoA + H(+). The catalysed reaction is N-terminal glycyl-L-lysyl-[protein] + tetradecanoyl-CoA = N-terminal glycyl-(N(6)-tetradecanoyl)-L-lysyl-[protein] + CoA + H(+). Its function is as follows. Adds a myristoyl group to the N-terminal glycine residue of certain cellular and viral proteins. Also able to mediate N-terminal lysine myristoylation of proteins: catalyzes myristoylation of ARF6 on both 'Gly-2' and 'Lys-3'. Lysine myristoylation is required to maintain ARF6 on membranes during the GTPase cycle. This Rattus norvegicus (Rat) protein is Glycylpeptide N-tetradecanoyltransferase 1 (Nmt1).